The following is a 329-amino-acid chain: Phenylalanine--tRNA ligase alpha subunit (329 aa).

Glu254 lines the Mg(2+) pocket.

Belongs to the class-II aminoacyl-tRNA synthetase family. Phe-tRNA synthetase alpha subunit type 1 subfamily. Tetramer of two alpha and two beta subunits. It depends on Mg(2+) as a cofactor.

Its subcellular location is the cytoplasm. It catalyses the reaction tRNA(Phe) + L-phenylalanine + ATP = L-phenylalanyl-tRNA(Phe) + AMP + diphosphate + H(+). The protein is Phenylalanine--tRNA ligase alpha subunit of Haemophilus influenzae (strain 86-028NP).